The primary structure comprises 405 residues: Terpene cyclase pbrA (405 aa).

Residues Asp103, Glu168, Asn229, Ser233, Glu237, and Asp241 each coordinate Mg(2+). The D(D/E)XX(D/E) motif motif lies at 103–108 (DDEISS). An NSE motif motif is present at residues 227–237 (LVNDLFSFYKE). The short motif at 316-323 (EDLGGSSA) is the WxxxxxRY motif element.

Belongs to the trichodiene synthase family. It depends on Mg(2+) as a cofactor.

Its pathway is secondary metabolite biosynthesis; terpenoid biosynthesis. Its function is as follows. Terpene cyclase; part of the gene cluster that mediates the biosynthesis of the sesquiterpenoid aspterric acid (AA), an inhibitor of dihydroxy-acid dehydratase (DHAD) effective as an herbicide. PbrA cyclizes farnesyl diphosphate (FPP) to produce (-)-daucane. The cytochrome P450 monooxygenase pbrBB then converts (-)-daucane into the alpha-epoxy carboxylate intermediate which is further converted into the tricyclic aspterric acid by the cytochrome P450 monooxygenase pbrC. This is Terpene cyclase pbrA from Penicillium brasilianum.